The sequence spans 607 residues: Threonine--tRNA ligase (607 aa).

The tract at residues 1–143 is editing domain; it reads MRVLYIHAER…SFKPEEARVA (143 aa). Catalytic regions lie at residues 193 to 489 and 194 to 489; these read PRYL…PRLP and RYLD…PRLP. Zn(2+)-binding residues include Cys286, His337, and His458.

Belongs to the class-II aminoacyl-tRNA synthetase family. In terms of assembly, homodimer. Zn(2+) is required as a cofactor.

The protein resides in the cytoplasm. It carries out the reaction tRNA(Thr) + L-threonine + ATP = L-threonyl-tRNA(Thr) + AMP + diphosphate + H(+). In terms of biological role, catalyzes the attachment of threonine to tRNA(Thr) in a two-step reaction: L-threonine is first activated by ATP to form Thr-AMP and then transferred to the acceptor end of tRNA(Thr). Also edits incorrectly charged L-seryl-tRNA(Thr). This is Threonine--tRNA ligase from Pyrobaculum calidifontis (strain DSM 21063 / JCM 11548 / VA1).